Here is a 1666-residue protein sequence, read N- to C-terminus: Atrochrysone carboxylic acid synthase PKS4 (1666 aa).

Residues 15–452 form the Ketosynthase family 3 (KS3) domain; sequence FEPIAIVGIG…GNAGFMVIEE (438 aa). Active-site for beta-ketoacyl synthase activity residues include Cys-194, His-332, and His-372. A malonyl-CoA:ACP transacylase (MAT) domain region spans residues 555 to 863; that stretch reads AFCFSGQGGE…WMTALDALMR (309 aa). The For acyl/malonyl transferase activity role is filled by Ser-632. Positions 905–1034 are N-terminal hotdog fold; sequence REVKASSTML…EQDLLESLSL (130 aa). Positions 905-1206 constitute a PKS/mFAS DH domain; sequence REVKASSTML…MAKMKIYVLK (302 aa). A product template (PT) domain region spans residues 935 to 1203; the sequence is LLNHVMAGYT…DVRMAKMKIY (269 aa). Positions 1050–1206 are C-terminal hotdog fold; that stretch reads STDVLRKELA…MAKMKIYVLK (157 aa). Residue Ser-1269 is modified to O-(pantetheine 4'-phosphoryl)serine. The region spanning 1331-1395 is the Carrier domain; it reads ATSPSLPIMP…TSTEPSQTLV (65 aa). Residues 1334–1397 form a proline-rich linker region region; that stretch reads PSLPIMPNGV…TEPSQTLVAN (64 aa). The interval 1444–1529 is alpha/beta hydrolase superfamily-type thioesterase (TE) domain; that stretch reads TVIGIHCPGL…PPGVVGLTAQ (86 aa).

The catalysed reaction is holo-[ACP] + 8 malonyl-CoA + 8 H(+) = atrochrysone carboxyl-[ACP] + 8 CO2 + 8 CoA + 2 H2O. The protein operates within secondary metabolite biosynthesis. In terms of biological role, non-reducing polyketide synthase that synthesizes the universal anthraquinone precursor atrochrysone carboxylic acid from malonyl-CoA. Produces a mixture of both 3R and 3S enantiomers with an excess of the 3S form. PKS4 catalyzes both hepta- and octaketide synthesis and also yields 6-hydroxymusizin, probably via carboxylating activity inherent to the KS domain. This Calonarius odorifer (Mushroom) protein is Atrochrysone carboxylic acid synthase PKS4.